The primary structure comprises 125 residues: Ribonuclease P protein component 1 (125 aa).

The span at 1 to 13 (MRRNGKEGKDRAP) shows a compositional bias: basic and acidic residues. The interval 1–24 (MRRNGKEGKDRAPGRPQRKGQEVA) is disordered.

It belongs to the eukaryotic/archaeal RNase P protein component 1 family. In terms of assembly, consists of a catalytic RNA component and at least 4-5 protein subunits.

Its subcellular location is the cytoplasm. It catalyses the reaction Endonucleolytic cleavage of RNA, removing 5'-extranucleotides from tRNA precursor.. Part of ribonuclease P, a protein complex that generates mature tRNA molecules by cleaving their 5'-ends. This is Ribonuclease P protein component 1 from Thermococcus onnurineus (strain NA1).